Consider the following 140-residue polypeptide: Ribonuclease P protein component (140 aa).

The tract at residues 115-140 is disordered; sequence RCKPGAPKPPPFKKRPNKSVKSNKQT.

It belongs to the RnpA family. In terms of assembly, consists of a catalytic RNA component (M1 or rnpB) and a protein subunit.

The enzyme catalyses Endonucleolytic cleavage of RNA, removing 5'-extranucleotides from tRNA precursor.. Functionally, RNaseP catalyzes the removal of the 5'-leader sequence from pre-tRNA to produce the mature 5'-terminus. It can also cleave other RNA substrates such as 4.5S RNA. The protein component plays an auxiliary but essential role in vivo by binding to the 5'-leader sequence and broadening the substrate specificity of the ribozyme. This Pseudoalteromonas translucida (strain TAC 125) protein is Ribonuclease P protein component.